Here is a 901-residue protein sequence, read N- to C-terminus: MLIPSKLSRPVRLDHTVVRERLLAKLSGANNFRLALITSPAGYGKTTLISQWAAGKNDIGWYSLDEGDNQQERFASYLIAAVQQATNGHCAICETMAQKRQYASLTSLFAQLFIELAEWHSPLYLVIDDYHLITNPVIHESMRFFIRHQPENLTLVVLSRNLPQLGIANLRVRDQLLEIGSQQLAFTHQEAKQFFDCRLSSPIEAAESSRICDDVSGWATALQLIALSARQNTHSAHKSARRLAGINASHLSDYLVDEVLDNVDLATRHFLLKSAILRSMNDALITRVTGEENGQMRLEEIERQGLFLQRMDDTGEWFCYHPLFGNFLRQRCQWELAAELPEIHRAAAESWMAQGFPSEAIHHALAAGDALMLRDILLNHAWSLFNHSELSLLEESLKALPWDSLLENPQLVLLQAWLMQSQHRYGEVNTLLARAEHEIKDIREGTMHAEFNALRAQVAINDGNPDEAERLAKLALEELPPGWFYSRIVATSVLGEVLHCKGELTRSLALMQQTEQMARQHDVWHYALWSLIQQSEILFAQGFLQTAWETQEKAFQLINEQHLEQLPMHEFLVRIRAQLLWAWARLDEAEASARSGIEVLSSYQPQQQLQCLAMLIQCSLARGDLDNARSQLNRLENLLGNGKYHSDWISNANKVRVMYWQMTGDKAAAANWLRHTAKPEFANNHFLQGQWRNIARAQILLGEFESAEIVLEELNENARSLRLMSDLNRNLLLLNQLYWQAGRKSDAQRVLLDALKLANRTGFISHFVIEGEAMAQQLRQLIQLNTLPELEQHRAQRILREINQHHRHKFAHFDENFVERLLNHPEVPELIRTSPLTQREWQVLGLIYSGYSNEQIAGELEVAATTIKTHIRNLYQKLGVAHRQAAVQHAQKLLKMMGYGV.

39–46 (SPAGYGKT) is a binding site for ATP. The 66-residue stretch at 829–894 (ELIRTSPLTQ…AAVQHAQKLL (66 aa)) folds into the HTH luxR-type domain. Positions 853–872 (NEQIAGELEVAATTIKTHIR) form a DNA-binding region, H-T-H motif.

It belongs to the MalT family. In terms of assembly, monomer in solution. Oligomerizes to an active state in the presence of the positive effectors ATP and maltotriose.

Its activity is regulated as follows. Activated by ATP and maltotriose, which are both required for DNA binding. Positively regulates the transcription of the maltose regulon whose gene products are responsible for uptake and catabolism of malto-oligosaccharides. Specifically binds to the promoter region of its target genes, recognizing a short DNA motif called the MalT box. The protein is HTH-type transcriptional regulator MalT of Escherichia coli O6:H1 (strain CFT073 / ATCC 700928 / UPEC).